The chain runs to 1342 residues: ATP-dependent RNA helicase TDRD9 (1342 aa).

Basic and acidic residues predominate over residues 31–63 (KAEAEDNATEVRSDKAFSELSSPEKEKSDDGNQ). The tract at residues 31–81 (KAEAEDNATEVRSDKAFSELSSPEKEKSDDGNQRRKRAQLPTGPGTSPPSL) is disordered. The 167-residue stretch at 99–265 (VSLIENNSVV…FGSPIRNQMN (167 aa)) folds into the Helicase ATP-binding domain. 112 to 119 (GATGSGKT) contributes to the ATP binding site. The DEAH box motif lies at 211–214 (DEVH). A Helicase C-terminal domain is found at 317–503 (SLIQSFDEME…LLKVKLLDMG (187 aa)). The region spanning 901–962 (SLYPNLLCVA…RELPSDLMTP (62 aa)) is the Tudor domain.

The protein belongs to the DEAD box helicase family. DEAH subfamily.

The protein resides in the cytoplasm. It is found in the nucleus. It catalyses the reaction ATP + H2O = ADP + phosphate + H(+). Functionally, ATP-binding RNA helicase which plays a central role during spermatogenesis by repressing transposable elements and preventing their mobilization, which is essential for the germline integrity. Acts via the piRNA metabolic process, which mediates the repression of transposable elements during meiosis by forming complexes composed of piRNAs and Piwi proteins and governs the methylation and subsequent repression of transposons. Acts downstream of piRNA biogenesis: exclusively required for transposon silencing in the nucleus, suggesting that it acts as a nuclear effector in the nucleus together with piwil4. This Danio rerio (Zebrafish) protein is ATP-dependent RNA helicase TDRD9.